Here is a 105-residue protein sequence, read N- to C-terminus: Met repressor (105 aa).

The protein belongs to the MetJ family. In terms of assembly, homodimer.

The protein resides in the cytoplasm. Its function is as follows. This regulatory protein, when combined with SAM (S-adenosylmethionine) represses the expression of the methionine regulon and of enzymes involved in SAM synthesis. The sequence is that of Met repressor from Citrobacter koseri (strain ATCC BAA-895 / CDC 4225-83 / SGSC4696).